Reading from the N-terminus, the 232-residue chain is Probable fimbrial chaperone LpfB (232 aa).

An N-terminal signal peptide occupies residues 1–24 (MDRMMKSKFVALALSLFLSQSVLA).

This sequence belongs to the periplasmic pilus chaperone family.

It is found in the periplasm. Part of the lpfABCC'DE fimbrial operon. LP fimbriae may participate in the interaction with eukaryotic cells by assisting in microcolony formation. The chain is Probable fimbrial chaperone LpfB (lpfB) from Escherichia coli O157:H7.